The sequence spans 636 residues: Carbon monoxide dehydrogenase 2 (636 aa).

The [4Fe-4S] cluster site is built by Cys-39, Cys-47, Cys-48, Cys-51, Cys-56, and Cys-70. The [Ni-4Fe-5S] cluster site is built by His-261, Cys-295, Cys-333, Cys-446, Cys-476, and Cys-526.

It belongs to the Ni-containing carbon monoxide dehydrogenase family. As to quaternary structure, homodimer. The cofactor is [4Fe-4S] cluster. [Ni-4Fe-5S] cluster is required as a cofactor.

Its subcellular location is the cytoplasm. It localises to the cell membrane. The enzyme catalyses CO + 2 oxidized [2Fe-2S]-[ferredoxin] + H2O = 2 reduced [2Fe-2S]-[ferredoxin] + CO2 + 2 H(+). With respect to regulation, inactivated by O(2). Functionally, CODH oxidizes carbon monoxide coupled, via CooF, to the reduction of a hydrogen cation by a hydrogenase (possibly CooH). The protein is Carbon monoxide dehydrogenase 2 (cooS2) of Carboxydothermus hydrogenoformans (strain ATCC BAA-161 / DSM 6008 / Z-2901).